The sequence spans 487 residues: Probable Xaa-Pro aminopeptidase MGYG_06974 (487 aa).

Mn(2+)-binding residues include Asp255, Asp266, Glu414, and Glu458.

The protein belongs to the peptidase M24B family. The cofactor is Mn(2+).

It carries out the reaction Release of any N-terminal amino acid, including proline, that is linked to proline, even from a dipeptide or tripeptide.. Functionally, catalyzes the removal of a penultimate prolyl residue from the N-termini of peptides. This Arthroderma gypseum (strain ATCC MYA-4604 / CBS 118893) (Microsporum gypseum) protein is Probable Xaa-Pro aminopeptidase MGYG_06974.